A 381-amino-acid polypeptide reads, in one-letter code: RING-H2 finger protein ATL1 (381 aa).

The interval 1–31 is disordered; that stretch reads MDLTDRRNPFNNLVFPPPPPPPSTTFTSPIF. A helical membrane pass occupies residues 46–66; sequence IAVIGILATAFLLVSYYIFVI. An RING-type; atypical zinc finger spans residues 134–176; that stretch reads CSVCLNEFQEDEKLRIIPNCCHVFHIDCIDIWLQGNANCPLCR. Disordered stretches follow at residues 249–269 and 334–354; these read TSNE…PIKF and RQIP…GNSR. A compositionally biased stretch (polar residues) spans 250–261; sequence SNEVSTGNSPKS.

The protein belongs to the RING-type zinc finger family. ATL subfamily.

The protein localises to the membrane. The catalysed reaction is S-ubiquitinyl-[E2 ubiquitin-conjugating enzyme]-L-cysteine + [acceptor protein]-L-lysine = [E2 ubiquitin-conjugating enzyme]-L-cysteine + N(6)-ubiquitinyl-[acceptor protein]-L-lysine.. The protein operates within protein modification; protein ubiquitination. In Arabidopsis thaliana (Mouse-ear cress), this protein is RING-H2 finger protein ATL1 (ATL1).